The sequence spans 246 residues: Major prion protein (246 aa).

The first 15 residues, 1-15 (MLVVFVATWSDLGLC), serve as a signal peptide directing secretion. Residues 16-223 (KKRPKPGGWN…ESQAYYQRGS (208 aa)) form an interaction with GRB2, ERI3 and SYN1 region. A disordered region spans residues 18–100 (RPKPGGWNTG…QWHKPSKPKT (83 aa)). 5 repeat units span residues 44–52 (PQGGGGWGQ), 53–60 (PHGGGWGQ), 61–68 (PHGGGWGQ), 69–76 (PHGGGWGQ), and 77–84 (PHGGGWGQ). Positions 44 to 84 (PQGGGGWGQPHGGGWGQPHGGGWGQPHGGGWGQPHGGGWGQ) are 5 X 8 AA tandem repeats of P-H-G-G-G-W-G-Q. The span at 45 to 88 (QGGGGWGQPHGGGWGQPHGGGWGQPHGGGWGQPHGGGWGQGGGT) shows a compositional bias: gly residues. Positions 54, 55, 56, 62, 63, 64, 70, 71, 72, 78, 79, and 80 each coordinate Cu(2+). Basic residues predominate over residues 91–100 (QWHKPSKPKT). Cys-172 and Cys-207 are oxidised to a cystine. Asn-174 and Asn-190 each carry an N-linked (GlcNAc...) asparagine glycan. A lipid anchor (GPI-anchor amidated serine) is attached at Ser-223. Positions 224–246 (SMVLFSSPPVILLISFLIFLIVG) are cleaved as a propeptide — removed in mature form.

Belongs to the prion family. Monomer and homodimer. Has a tendency to aggregate into amyloid fibrils containing a cross-beta spine, formed by a steric zipper of superposed beta-strands. Soluble oligomers may represent an intermediate stage on the path to fibril formation. Copper binding may promote oligomerization. Interacts with GRB2, APP, ERI3/PRNPIP and SYN1. Mislocalized cytosolically exposed PrP interacts with MGRN1; this interaction alters MGRN1 subcellular location and causes lysosomal enlargement. Interacts with KIAA1191.

It localises to the cell membrane. The protein resides in the golgi apparatus. Functionally, its primary physiological function is unclear. Has cytoprotective activity against internal or environmental stresses. May play a role in neuronal development and synaptic plasticity. May be required for neuronal myelin sheath maintenance. May play a role in iron uptake and iron homeostasis. Soluble oligomers are toxic to cultured neuroblastoma cells and induce apoptosis (in vitro). Association with GPC1 (via its heparan sulfate chains) targets PRNP to lipid rafts. Also provides Cu(2+) or Zn(2+) for the ascorbate-mediated GPC1 deaminase degradation of its heparan sulfate side chains. In Erythrocebus patas (Red guenon), this protein is Major prion protein (PRNP).